We begin with the raw amino-acid sequence, 713 residues long: Nuclear poly(A) polymerase 1 (713 aa).

ATP-binding positions include 91-93, 103-106, D159, Y229, and 238-239; these read FGS, ADID, and GI. D104, D106, and D159 together coordinate Mg(2+). The segment at 480–555 is disordered; the sequence is FVFPGGVRPS…TLTDQPRNSK (76 aa). Residues 507 to 526 are compositionally biased toward low complexity; that stretch reads SSTSSAPAATTTTTEMSSES.

The protein belongs to the poly(A) polymerase family. In terms of assembly, monomer. Forms a complex with cleavage and polyadenylation specificity factor (CPSF) subunit PAPS4. It depends on Mg(2+) as a cofactor. Mn(2+) is required as a cofactor. As to expression, expressed in stems, cotyledons, hypocotyls, radicle, leaves, and, to a lower extent, in roots (including primary and secondary roots as well as root tips) and flowers. In radicle, roots and leaves, mainly present in vascular tissues.

Its subcellular location is the nucleus. It carries out the reaction RNA(n) + ATP = RNA(n)-3'-adenine ribonucleotide + diphosphate. Its function is as follows. Essential protein. Polymerase that creates the 3'-poly(A) tail of mRNA's. Also required for the endoribonucleolytic cleavage reaction at some polyadenylation sites. May acquire specificity through interaction with a cleavage and polyadenylation specificity factor (CPSF) at its C-terminus. In Arabidopsis thaliana (Mouse-ear cress), this protein is Nuclear poly(A) polymerase 1.